The primary structure comprises 155 residues: Ribosomal RNA large subunit methyltransferase H (155 aa).

S-adenosyl-L-methionine is bound by residues leucine 72, glycine 103, and 122–127 (LSDLTL).

This sequence belongs to the RNA methyltransferase RlmH family. Homodimer.

It is found in the cytoplasm. It catalyses the reaction pseudouridine(1915) in 23S rRNA + S-adenosyl-L-methionine = N(3)-methylpseudouridine(1915) in 23S rRNA + S-adenosyl-L-homocysteine + H(+). In terms of biological role, specifically methylates the pseudouridine at position 1915 (m3Psi1915) in 23S rRNA. The polypeptide is Ribosomal RNA large subunit methyltransferase H (Polaromonas naphthalenivorans (strain CJ2)).